Consider the following 69-residue polypeptide: Large ribosomal subunit protein uL29 (69 aa).

This sequence belongs to the universal ribosomal protein uL29 family.

The sequence is that of Large ribosomal subunit protein uL29 from Rhodopseudomonas palustris (strain TIE-1).